A 206-amino-acid chain; its full sequence is MNKDTDNVEVNIVYKNRTISVPINITMSICALTALLKSYSITGSYHGYNHNYEYHHYHGYNHYNGYNYGKNNKGKIRVGVVSDHKPPFVLTKFPNEMLLLNFRIKEGDRFYVIFEDDYGIPNTHAHDIHESYKQYEPYEPYKSQKNIYIKTLKRAIIADNHRMVEYILDKELVDLHSNKKLYEKCIKLSKIHSRTYIQNLLEVVAL.

Residues 21–43 (VPINITMSICALTALLKSYSITG) form a helical membrane-spanning segment.

The protein localises to the membrane. This is an uncharacterized protein from Acanthamoeba polyphaga (Amoeba).